Reading from the N-terminus, the 407-residue chain is 4-hydroxy-3-methylbut-2-en-1-yl diphosphate synthase (ferredoxin) (407 aa).

The [4Fe-4S] cluster site is built by Cys316, Cys319, Cys350, and Glu357.

This sequence belongs to the IspG family. It depends on [4Fe-4S] cluster as a cofactor.

It catalyses the reaction (2E)-4-hydroxy-3-methylbut-2-enyl diphosphate + 2 oxidized [2Fe-2S]-[ferredoxin] + H2O = 2-C-methyl-D-erythritol 2,4-cyclic diphosphate + 2 reduced [2Fe-2S]-[ferredoxin] + H(+). The protein operates within isoprenoid biosynthesis; isopentenyl diphosphate biosynthesis via DXP pathway; isopentenyl diphosphate from 1-deoxy-D-xylulose 5-phosphate: step 5/6. In terms of biological role, converts 2C-methyl-D-erythritol 2,4-cyclodiphosphate (ME-2,4cPP) into 1-hydroxy-2-methyl-2-(E)-butenyl 4-diphosphate. The chain is 4-hydroxy-3-methylbut-2-en-1-yl diphosphate synthase (ferredoxin) from Cyanothece sp. (strain PCC 7425 / ATCC 29141).